The chain runs to 214 residues: ATP phosphoribosyltransferase (214 aa).

The protein belongs to the ATP phosphoribosyltransferase family. Short subfamily. As to quaternary structure, heteromultimer composed of HisG and HisZ subunits.

It is found in the cytoplasm. It catalyses the reaction 1-(5-phospho-beta-D-ribosyl)-ATP + diphosphate = 5-phospho-alpha-D-ribose 1-diphosphate + ATP. Its pathway is amino-acid biosynthesis; L-histidine biosynthesis; L-histidine from 5-phospho-alpha-D-ribose 1-diphosphate: step 1/9. Functionally, catalyzes the condensation of ATP and 5-phosphoribose 1-diphosphate to form N'-(5'-phosphoribosyl)-ATP (PR-ATP). Has a crucial role in the pathway because the rate of histidine biosynthesis seems to be controlled primarily by regulation of HisG enzymatic activity. The chain is ATP phosphoribosyltransferase from Marinobacter nauticus (strain ATCC 700491 / DSM 11845 / VT8) (Marinobacter aquaeolei).